We begin with the raw amino-acid sequence, 236 residues long: Lipoprotein B (236 aa).

Residues 1–27 (MNKKYFKKYSSILIFSMSILAPMTLAS) form the signal peptide. A lipid anchor (N-palmitoyl cysteine) is attached at Cys-28. Residue Cys-28 is the site of S-diacylglycerol cysteine attachment. Disordered regions lie at residues 35–112 (EKDK…KSNV) and 134–236 (SEKQ…GDAF). Positions 43–60 (STNLSEPNKSNTSKTNTF) are enriched in polar residues. Over residues 61-74 (QDKKDSTNKIDSQE) the composition is skewed to basic and acidic residues. Polar residues-rich tracts occupy residues 75 to 112 (SSKT…KSNV) and 143 to 157 (NASS…NTLK). A compositionally biased stretch (basic and acidic residues) spans 158–175 (NQDKTKQENDQFKQESKD). The segment covering 193–212 (VISSQSTTRLEMPKNDQSNS) has biased composition (polar residues). Over residues 215 to 228 (EDNKKSPESPKWWE) the composition is skewed to basic and acidic residues.

It belongs to the M.pulmonis LipAB lipoprotein family.

The protein resides in the cell membrane. This is Lipoprotein B (lipB) from Mycoplasmopsis pulmonis (strain UAB CTIP) (Mycoplasma pulmonis).